The chain runs to 147 residues: Hemoglobin subunit deltaH (147 aa).

A Globin domain is found at R3–H147. H64 and H93 together coordinate heme b.

The protein belongs to the globin family. Heterotetramer of two delta chains and two alpha chains. Red blood cells.

The sequence is that of Hemoglobin subunit deltaH from Procavia capensis (Rock hyrax).